Consider the following 193-residue polypeptide: Ion-translocating oxidoreductase complex subunit A (193 aa).

The next 6 membrane-spanning stretches (helical) occupy residues 5 to 25, 47 to 67, 72 to 92, 102 to 122, 134 to 154, and 171 to 191; these read LLLFVGTVLVNNFVLVKFLGL, FVMTLASICAWLIDTWILIPL, LRTMAFILVIAVVVQFTEMVV, LLGIFLPLITTNCAVLGVALL, ALYGFSAAVGFSLVMVLFAAI, and AIALITAGLMSLAFMGFSGLV.

Belongs to the NqrDE/RnfAE family. In terms of assembly, the complex is composed of six subunits: RsxA, RsxB, RsxC, RsxD, RsxE and RsxG.

Its subcellular location is the cell inner membrane. Part of a membrane-bound complex that couples electron transfer with translocation of ions across the membrane. Required to maintain the reduced state of SoxR. The polypeptide is Ion-translocating oxidoreductase complex subunit A (Escherichia coli O45:K1 (strain S88 / ExPEC)).